The sequence spans 580 residues: 2-succinyl-5-enolpyruvyl-6-hydroxy-3-cyclohexene-1-carboxylate synthase (580 aa).

This sequence belongs to the TPP enzyme family. MenD subfamily. As to quaternary structure, homodimer. Mg(2+) is required as a cofactor. It depends on Mn(2+) as a cofactor. Thiamine diphosphate serves as cofactor.

It catalyses the reaction isochorismate + 2-oxoglutarate + H(+) = 5-enolpyruvoyl-6-hydroxy-2-succinyl-cyclohex-3-ene-1-carboxylate + CO2. It functions in the pathway quinol/quinone metabolism; 1,4-dihydroxy-2-naphthoate biosynthesis; 1,4-dihydroxy-2-naphthoate from chorismate: step 2/7. The protein operates within quinol/quinone metabolism; menaquinone biosynthesis. Functionally, catalyzes the thiamine diphosphate-dependent decarboxylation of 2-oxoglutarate and the subsequent addition of the resulting succinic semialdehyde-thiamine pyrophosphate anion to isochorismate to yield 2-succinyl-5-enolpyruvyl-6-hydroxy-3-cyclohexene-1-carboxylate (SEPHCHC). In Listeria monocytogenes serovar 1/2a (strain ATCC BAA-679 / EGD-e), this protein is 2-succinyl-5-enolpyruvyl-6-hydroxy-3-cyclohexene-1-carboxylate synthase.